A 635-amino-acid chain; its full sequence is Early transcription factor 70 kDa subunit (635 aa).

Residues 32–185 (RSIIDENKSV…SNIISLMSDE (154 aa)) form the Helicase ATP-binding domain. 45 to 52 (HIMGSGKT) is a binding site for ATP. Positions 135 to 138 (DEAH) match the DEXH box motif. The Helicase C-terminal domain maps to 326–505 (KFKYFINKIE…TLPFDIKKLL (180 aa)).

This sequence belongs to the helicase family. VETF subfamily. In terms of assembly, heterodimer of a 70 kDa and a 82 kDa subunit. Part of the early transcription complex composed of ETF, RAP94, and the DNA-directed RNA polymerase.

The protein resides in the virion. In terms of biological role, acts with RNA polymerase to initiate transcription from early gene promoters. Is recruited by the RPO-associated protein of 94 kDa (RAP94) to form the early transcription complex, which also contains the core RNA polymerase. ETF heterodimer binds to early gene promoters. The polypeptide is Early transcription factor 70 kDa subunit (VETFS) (Oryctolagus cuniculus (Rabbit)).